Here is a 397-residue protein sequence, read N- to C-terminus: ATP phosphoribosyltransferase regulatory subunit (397 aa).

This sequence belongs to the class-II aminoacyl-tRNA synthetase family. HisZ subfamily. As to quaternary structure, heteromultimer composed of HisG and HisZ subunits.

It is found in the cytoplasm. Its pathway is amino-acid biosynthesis; L-histidine biosynthesis; L-histidine from 5-phospho-alpha-D-ribose 1-diphosphate: step 1/9. Its function is as follows. Required for the first step of histidine biosynthesis. May allow the feedback regulation of ATP phosphoribosyltransferase activity by histidine. The protein is ATP phosphoribosyltransferase regulatory subunit of Halalkalibacterium halodurans (strain ATCC BAA-125 / DSM 18197 / FERM 7344 / JCM 9153 / C-125) (Bacillus halodurans).